A 196-amino-acid chain; its full sequence is Putative acetyltransferase YJL218W (196 aa).

Residue Asn-84 coordinates acetyl-CoA. Residue His-114 is the Proton donor/acceptor of the active site. Acetyl-CoA is bound by residues Gly-141, Ala-159, 164 to 165 (IR), Lys-179, and Arg-182.

The protein belongs to the transferase hexapeptide repeat family. In terms of assembly, homodimer.

In Saccharomyces cerevisiae (strain ATCC 204508 / S288c) (Baker's yeast), this protein is Putative acetyltransferase YJL218W.